A 201-amino-acid chain; its full sequence is MQPFISHTGLAVIIDSANVDTDQIIPKQFLSKVTRDGFGVHLFHDWRYLDDAGDQLNPDFTLNKPRYQGASILVSQENFGCGSSREHAPWALADFGLKVIIAPSFADIFYGNSINNGLLPVRLADAEVKQLMAEVEAKEGAEISVDLQALTVTSPSGSQFHFEIAQSARHNLLNGLDAIGLTLSHADTIANYEANIPSWRR.

It belongs to the LeuD family. LeuD type 1 subfamily. As to quaternary structure, heterodimer of LeuC and LeuD.

The catalysed reaction is (2R,3S)-3-isopropylmalate = (2S)-2-isopropylmalate. It participates in amino-acid biosynthesis; L-leucine biosynthesis; L-leucine from 3-methyl-2-oxobutanoate: step 2/4. Catalyzes the isomerization between 2-isopropylmalate and 3-isopropylmalate, via the formation of 2-isopropylmaleate. The protein is 3-isopropylmalate dehydratase small subunit of Shewanella pealeana (strain ATCC 700345 / ANG-SQ1).